A 119-amino-acid polypeptide reads, in one-letter code: MARVKTGPMSRKRHKKILKLARGYRNAHSKLFRTAHQSVMKALSYAYAHRKKKKGDFRKIWITRINAAARMNGISYSVMMNGLKKAGVAVNRKMLADLAVNDLPAFAKLVDVAKAKGNA.

It belongs to the bacterial ribosomal protein bL20 family.

Its function is as follows. Binds directly to 23S ribosomal RNA and is necessary for the in vitro assembly process of the 50S ribosomal subunit. It is not involved in the protein synthesizing functions of that subunit. In Heliobacterium modesticaldum (strain ATCC 51547 / Ice1), this protein is Large ribosomal subunit protein bL20.